A 723-amino-acid polypeptide reads, in one-letter code: Catalase-peroxidase (723 aa).

The tryptophyl-tyrosyl-methioninium (Trp-Tyr) (with M-251) cross-link spans 97–225; the sequence is WHAAGSYRVT…LAAVQMGLIY (129 aa). The active-site Proton acceptor is the His98. The segment at residues 225 to 251 is a cross-link (tryptophyl-tyrosyl-methioninium (Tyr-Met) (with W-97)); that stretch reads YVNPEGVNGKSDPLATAAQMRETFARM. His266 contributes to the heme b binding site.

This sequence belongs to the peroxidase family. Peroxidase/catalase subfamily. Homodimer or homotetramer. Heme b is required as a cofactor. In terms of processing, formation of the three residue Trp-Tyr-Met cross-link is important for the catalase, but not the peroxidase activity of the enzyme.

The catalysed reaction is H2O2 + AH2 = A + 2 H2O. The enzyme catalyses 2 H2O2 = O2 + 2 H2O. Functionally, bifunctional enzyme with both catalase and broad-spectrum peroxidase activity. Involved in tumorigenesis. The polypeptide is Catalase-peroxidase (Rhizobium radiobacter (Agrobacterium tumefaciens)).